A 36-amino-acid polypeptide reads, in one-letter code: Thrombin-like enzyme TLP (36 aa).

One can recognise a Peptidase S1 domain in the interval 1-36; the sequence is IGGFECNEHEHRSLVYLYNSAGFFCAGTLLNHEWVV.

This sequence belongs to the peptidase S1 family. Snake venom subfamily. Monomer. Expressed by the venom gland.

The protein localises to the secreted. In terms of biological role, thrombin-like snake venom serine protease. Shows strong hydrolytic activity towards Boc-Asp(oBzl)-Pro-Arg-MCA, a synthetic substrate for thrombin. The polypeptide is Thrombin-like enzyme TLP (Naja naja (Indian cobra)).